The sequence spans 412 residues: NAD-dependent dihydropyrimidine dehydrogenase subunit PreT (412 aa).

NAD(+) is bound at residue glutamate 286.

It belongs to the NADH dehydrogenase family. In terms of assembly, heterotetramer of 2 PreA and 2 PreT subunits.

The enzyme catalyses 5,6-dihydrouracil + NAD(+) = uracil + NADH + H(+). The catalysed reaction is 5,6-dihydrothymine + NAD(+) = thymine + NADH + H(+). Functionally, involved in pyrimidine base degradation. Catalyzes physiologically the reduction of uracil to 5,6-dihydrouracil (DHU) by using NADH as a specific cosubstrate. It also catalyzes the reverse reaction and the reduction of thymine to 5,6-dihydrothymine (DHT). The sequence is that of NAD-dependent dihydropyrimidine dehydrogenase subunit PreT (preT) from Escherichia coli O157:H7.